The following is a 157-amino-acid chain: 2-C-methyl-D-erythritol 2,4-cyclodiphosphate synthase (157 aa).

A divalent metal cation-binding residues include aspartate 8 and histidine 10. Residues 8–10 (DVH) and 34–35 (HS) contribute to the 4-CDP-2-C-methyl-D-erythritol 2-phosphate site. Position 42 (histidine 42) interacts with a divalent metal cation. Residues 56–58 (DIG), 61–65 (FPDTD), 100–106 (AQAPKMA), 132–135 (TTTE), phenylalanine 139, and arginine 142 contribute to the 4-CDP-2-C-methyl-D-erythritol 2-phosphate site.

Belongs to the IspF family. Homotrimer. A divalent metal cation serves as cofactor.

It catalyses the reaction 4-CDP-2-C-methyl-D-erythritol 2-phosphate = 2-C-methyl-D-erythritol 2,4-cyclic diphosphate + CMP. The protein operates within isoprenoid biosynthesis; isopentenyl diphosphate biosynthesis via DXP pathway; isopentenyl diphosphate from 1-deoxy-D-xylulose 5-phosphate: step 4/6. Its function is as follows. Involved in the biosynthesis of isopentenyl diphosphate (IPP) and dimethylallyl diphosphate (DMAPP), two major building blocks of isoprenoid compounds. Catalyzes the conversion of 4-diphosphocytidyl-2-C-methyl-D-erythritol 2-phosphate (CDP-ME2P) to 2-C-methyl-D-erythritol 2,4-cyclodiphosphate (ME-CPP) with a corresponding release of cytidine 5-monophosphate (CMP). The protein is 2-C-methyl-D-erythritol 2,4-cyclodiphosphate synthase of Pseudomonas fluorescens (strain SBW25).